Reading from the N-terminus, the 350-residue chain is Thymidine kinase (350 aa).

Residue 17–24 (GPFGIGKT) coordinates ATP. Glutamate 45 serves as the catalytic Proton acceptor. A substrate-binding site is contributed by glutamine 86. Arginine 176 serves as a coordination point for ATP. Arginine 182 contacts substrate.

The protein belongs to the herpesviridae thymidine kinase family. In terms of assembly, homodimer.

The enzyme catalyses thymidine + ATP = dTMP + ADP + H(+). Functionally, catalyzes the transfer of the gamma-phospho group of ATP to thymidine to generate dTMP in the salvage pathway of pyrimidine synthesis. The dTMP serves as a substrate for DNA polymerase during viral DNA replication. Allows the virus to be reactivated and to grow in non-proliferative cells lacking a high concentration of phosphorylated nucleic acid precursors. The polypeptide is Thymidine kinase (Gallus gallus (Chicken)).